We begin with the raw amino-acid sequence, 216 residues long: FMN-dependent NADH:quinone oxidoreductase (216 aa).

FMN-binding positions include serine 10 and 15–17; that span reads SIS.

Belongs to the azoreductase type 1 family. Homodimer. FMN serves as cofactor.

It catalyses the reaction 2 a quinone + NADH + H(+) = 2 a 1,4-benzosemiquinone + NAD(+). The enzyme catalyses N,N-dimethyl-1,4-phenylenediamine + anthranilate + 2 NAD(+) = 2-(4-dimethylaminophenyl)diazenylbenzoate + 2 NADH + 2 H(+). Functionally, quinone reductase that provides resistance to thiol-specific stress caused by electrophilic quinones. Also exhibits azoreductase activity. Catalyzes the reductive cleavage of the azo bond in aromatic azo compounds to the corresponding amines. The protein is FMN-dependent NADH:quinone oxidoreductase of Nocardia farcinica (strain IFM 10152).